We begin with the raw amino-acid sequence, 406 residues long: Formate-dependent phosphoribosylglycinamide formyltransferase (406 aa).

Residues Glu-27 to Leu-28 and Glu-87 contribute to the N(1)-(5-phospho-beta-D-ribosyl)glycinamide site. Residues Arg-120, Lys-162, Ser-167–Gln-172, Glu-202–Ile-205, and Glu-210 contribute to the ATP site. The ATP-grasp domain occupies Arg-125 to Leu-320. Residues Glu-279 and Glu-291 each coordinate Mg(2+). Residues Asp-298, Lys-367, and Arg-374–Arg-375 each bind N(1)-(5-phospho-beta-D-ribosyl)glycinamide.

It belongs to the PurK/PurT family. As to quaternary structure, homodimer.

The catalysed reaction is N(1)-(5-phospho-beta-D-ribosyl)glycinamide + formate + ATP = N(2)-formyl-N(1)-(5-phospho-beta-D-ribosyl)glycinamide + ADP + phosphate + H(+). The protein operates within purine metabolism; IMP biosynthesis via de novo pathway; N(2)-formyl-N(1)-(5-phospho-D-ribosyl)glycinamide from N(1)-(5-phospho-D-ribosyl)glycinamide (formate route): step 1/1. Functionally, involved in the de novo purine biosynthesis. Catalyzes the transfer of formate to 5-phospho-ribosyl-glycinamide (GAR), producing 5-phospho-ribosyl-N-formylglycinamide (FGAR). Formate is provided by PurU via hydrolysis of 10-formyl-tetrahydrofolate. The polypeptide is Formate-dependent phosphoribosylglycinamide formyltransferase (Bordetella parapertussis (strain 12822 / ATCC BAA-587 / NCTC 13253)).